The sequence spans 229 residues: NAD(P)H-hydrate epimerase (229 aa).

One can recognise a YjeF N-terminal domain in the interval 10-217 (AINVDLELFN…ALQRKYELNL (208 aa)). 60 to 64 (NNGGD) contacts (6S)-NADPHX. Positions 61 and 125 each coordinate K(+). Residues 129 to 135 (GFSFKPP) and Asp158 each bind (6S)-NADPHX. Residue Ser161 coordinates K(+).

It belongs to the NnrE/AIBP family. K(+) serves as cofactor.

It catalyses the reaction (6R)-NADHX = (6S)-NADHX. The catalysed reaction is (6R)-NADPHX = (6S)-NADPHX. Catalyzes the epimerization of the S- and R-forms of NAD(P)HX, a damaged form of NAD(P)H that is a result of enzymatic or heat-dependent hydration. This is a prerequisite for the S-specific NAD(P)H-hydrate dehydratase to allow the repair of both epimers of NAD(P)HX. The polypeptide is NAD(P)H-hydrate epimerase (Drosophila mojavensis (Fruit fly)).